The chain runs to 183 residues: Endoribonuclease YbeY (183 aa).

3 residues coordinate Zn(2+): His140, His144, and His150.

Belongs to the endoribonuclease YbeY family. Zn(2+) is required as a cofactor.

It is found in the cytoplasm. Single strand-specific metallo-endoribonuclease involved in late-stage 70S ribosome quality control and in maturation of the 3' terminus of the 16S rRNA. This is Endoribonuclease YbeY from Bradyrhizobium diazoefficiens (strain JCM 10833 / BCRC 13528 / IAM 13628 / NBRC 14792 / USDA 110).